A 374-amino-acid chain; its full sequence is Isopentenyl-diphosphate delta-isomerase (374 aa).

Position 13–14 (13–14 (RK)) interacts with substrate. FMN is bound by residues 71–73 (GMT), S104, and N132. 104-106 (SQR) is a substrate binding site. Q171 is a binding site for substrate. E172 contacts Mg(2+). FMN-binding positions include K203, T233, 282-284 (GMR), and 303-304 (AL).

The protein belongs to the IPP isomerase type 2 family. As to quaternary structure, homooctamer. Dimer of tetramers. It depends on FMN as a cofactor. The cofactor is NADPH. Mg(2+) serves as cofactor.

It is found in the cytoplasm. The catalysed reaction is isopentenyl diphosphate = dimethylallyl diphosphate. Functionally, involved in the biosynthesis of isoprenoids. Catalyzes the 1,3-allylic rearrangement of the homoallylic substrate isopentenyl (IPP) to its allylic isomer, dimethylallyl diphosphate (DMAPP). The polypeptide is Isopentenyl-diphosphate delta-isomerase (Thermococcus onnurineus (strain NA1)).